We begin with the raw amino-acid sequence, 93 residues long: Phosphocarrier protein HPr (93 aa).

One can recognise an HPr domain in the interval 2–89 (AERRVNVGWA…KLVAEGLEEL (88 aa)). Histidine 15 functions as the Pros-phosphohistidine intermediate in the catalytic mechanism.

This sequence belongs to the HPr family.

It localises to the cytoplasm. In terms of biological role, general (non sugar-specific) component of the phosphoenolpyruvate-dependent sugar phosphotransferase system (sugar PTS). This major carbohydrate active-transport system catalyzes the phosphorylation of incoming sugar substrates concomitantly with their translocation across the cell membrane. The phosphoryl group from phosphoenolpyruvate (PEP) is transferred to the phosphoryl carrier protein HPr by enzyme I. Phospho-HPr then transfers it to the PTS EIIA domain. The sequence is that of Phosphocarrier protein HPr (ptsH) from Streptomyces coelicolor (strain ATCC BAA-471 / A3(2) / M145).